The following is a 957-amino-acid chain: Glycine dehydrogenase (decarboxylating) (957 aa).

An N6-(pyridoxal phosphate)lysine modification is found at K708.

The protein belongs to the GcvP family. As to quaternary structure, the glycine cleavage system is composed of four proteins: P, T, L and H. It depends on pyridoxal 5'-phosphate as a cofactor.

It catalyses the reaction N(6)-[(R)-lipoyl]-L-lysyl-[glycine-cleavage complex H protein] + glycine + H(+) = N(6)-[(R)-S(8)-aminomethyldihydrolipoyl]-L-lysyl-[glycine-cleavage complex H protein] + CO2. The glycine cleavage system catalyzes the degradation of glycine. The P protein binds the alpha-amino group of glycine through its pyridoxal phosphate cofactor; CO(2) is released and the remaining methylamine moiety is then transferred to the lipoamide cofactor of the H protein. The protein is Glycine dehydrogenase (decarboxylating) of Escherichia coli O8 (strain IAI1).